An 89-amino-acid polypeptide reads, in one-letter code: Small ribosomal subunit protein uS15 (89 aa).

Positions 1–23 (MALTKERTASVVQQYGSGEKDTG) are disordered.

This sequence belongs to the universal ribosomal protein uS15 family. In terms of assembly, part of the 30S ribosomal subunit. Forms a bridge to the 50S subunit in the 70S ribosome, contacting the 23S rRNA.

In terms of biological role, one of the primary rRNA binding proteins, it binds directly to 16S rRNA where it helps nucleate assembly of the platform of the 30S subunit by binding and bridging several RNA helices of the 16S rRNA. Its function is as follows. Forms an intersubunit bridge (bridge B4) with the 23S rRNA of the 50S subunit in the ribosome. The sequence is that of Small ribosomal subunit protein uS15 from Treponema pallidum (strain Nichols).